A 726-amino-acid chain; its full sequence is MSTSDDIHNTTATGKCPFHQGGHDQSAGAGTTTRDWWPNQLRVDLLNQHSNRSNPLGEDFDYRKEFSKLDYYGLKKDLKALLTESQPWWPADWGSYAGLFIRMAWHGAGTYRSIDGRGGAGRGQQRFAPLNSWPDNVSLDKARRLLWPIKQKYGQKISWADLFILAGNVALENSGFRTFGFGAGREDVWEPDLDVNWGDEKAWLTHRHPEALAKAPLGATEMGLIYVNPEGPDHSGEPLSAAAAIRATFGNMGMNDEETVALIAGGHTLGKTHGAGPTSNVGPDPEAAPIEEQGLGWASTYGSGVGADAITSGLEVVWTQTPTQWSNYFFENLFKYEWVQTRSPAGAIQFEAVDAPEIIPDPFDPSKKRKPTMLVTDLTLRFDPEFEKISRRFLNDPQAFNEAFARAWFKLTHRDMGPKSRYIGPEVPKEDLIWQDPLPQPIYNPTEQDIIDLKFAIADSGLSVSELVSVAWASASTFRGGDKRGGANGARLALMPQRDWDVNAAAVRALPVLEKIQKESGKASLADIIVLAGVVGVEKAASAAGLSIHVPFAPGRVDARQDQTDIEMFELLEPIADGFRNYRARLDVSTTESLLIDKAQQLTLTAPEMTALVGGMRVLGAYFDGSKNGVFTDRVGVLSNDFFVNLLDMRYEWKATDESKELFEGRDRETGEVKYTASRADLVFGSNSVLRAVAEVYASSDAHEKFVKDFVAAWVKVMNLDRFDLL.

A disordered region spans residues 1–33 (MSTSDDIHNTTATGKCPFHQGGHDQSAGAGTTT). A cross-link (tryptophyl-tyrosyl-methioninium (Trp-Tyr) (with M-252)) is located at residues 105 to 226 (WHGAGTYRSI…LGATEMGLIY (122 aa)). Residue histidine 106 is the Proton acceptor of the active site. Residues 226 to 252 (YVNPEGPDHSGEPLSAAAAIRATFGNM) constitute a cross-link (tryptophyl-tyrosyl-methioninium (Tyr-Met) (with W-105)). A heme b-binding site is contributed by histidine 267.

The protein belongs to the peroxidase family. Peroxidase/catalase subfamily. In terms of assembly, homodimer or homotetramer. The cofactor is heme b. Post-translationally, formation of the three residue Trp-Tyr-Met cross-link is important for the catalase, but not the peroxidase activity of the enzyme.

It carries out the reaction H2O2 + AH2 = A + 2 H2O. The catalysed reaction is 2 H2O2 = O2 + 2 H2O. Its function is as follows. Bifunctional enzyme with both catalase and broad-spectrum peroxidase activity. This is Catalase-peroxidase from Shigella flexneri.